The chain runs to 334 residues: Chemotactic signal transduction system substrate-binding protein CosB (334 aa).

A signal peptide spans 1 to 29 (MMDTPEHASTSSRRQLLGMLAAGGTTAVA).

The protein belongs to the OsmX family.

It is found in the cell membrane. In terms of biological role, mediates chemotaxis towards compatible osmolytes. May function as a receptor that binds the osmolytes and transduces a signal to CosT. Has probably no additional role in transport. The protein is Chemotactic signal transduction system substrate-binding protein CosB (cosB) of Halobacterium salinarum (strain ATCC 29341 / DSM 671 / R1).